A 477-amino-acid polypeptide reads, in one-letter code: Bile acid transporter (477 aa).

15 consecutive transmembrane segments (helical) span residues 13–33, 50–70, 83–103, 107–127, 139–159, 166–186, 206–226, 228–248, 272–292, 301–321, 333–353, 359–379, 381–401, 406–426, and 444–464; these read FVPF…TAVL, WISL…GKLG, IVIF…IFML, FIVG…IVTE, LYML…GLIM, VMMW…TFSI, LVVV…NIGW, STAF…LVMV, LILF…IVFV, IISS…SVII, VLTF…LFKA, IFAA…TIFM, VALS…YGLF, APFG…ANIA, and ISSI…GIIL.

This sequence belongs to the major facilitator superfamily.

Its subcellular location is the cell membrane. The protein operates within lipid metabolism; bile acid degradation. In Clostridium scindens (strain JCM 10418 / VPI 12708), this protein is Bile acid transporter (baiG).